The sequence spans 397 residues: Aromatic-amino-acid aminotransferase (397 aa).

Gly34, Tyr66, Trp131, and Asn184 together coordinate substrate. Lys247 carries the N6-(pyridoxal phosphate)lysine modification. Substrate-binding residues include Arg281 and Arg375.

Belongs to the class-I pyridoxal-phosphate-dependent aminotransferase family. Homodimer. Requires pyridoxal 5'-phosphate as cofactor.

The protein resides in the cytoplasm. It catalyses the reaction an aromatic L-alpha-amino acid + 2-oxoglutarate = an aromatic oxo-acid + L-glutamate. It carries out the reaction (3S)-3-methyl-L-phenylalanine + 2-oxoglutarate = (3S)-2-oxo-3-phenylbutanoate + L-glutamate. It participates in amino-acid biosynthesis; L-phenylalanine biosynthesis; L-phenylalanine from phenylpyruvate (ArAT route): step 1/1. The protein operates within amino-acid biosynthesis; L-tyrosine biosynthesis; L-tyrosine from (4-hydroxyphenyl)pyruvate: step 1/1. Functionally, broad-specificity enzyme that catalyzes the transamination of 2-ketoisocaproate, p-hydroxyphenylpyruvate, and phenylpyruvate to yield leucine, tyrosine, and phenylalanine, respectively. In vitro, is able to catalyze the conversion of beta-methyl phenylpyruvate to the nonproteinogenic amino acid (2S,3S)-beta-methyl-phenylalanine, a building block of the antibiotic mannopeptimycin produced by Streptomyces hygroscopicus NRRL3085. The sequence is that of Aromatic-amino-acid aminotransferase (tyrB) from Escherichia coli (strain K12).